The following is a 552-amino-acid chain: Hydroxylamine reductase (552 aa).

Positions 3, 6, 15, and 21 each coordinate [4Fe-4S] cluster. Hybrid [4Fe-2O-2S] cluster is bound by residues His247, Glu271, Cys315, Cys407, Cys435, Cys460, Glu495, and Lys497. Position 407 is a cysteine persulfide (Cys407).

This sequence belongs to the HCP family. Requires [4Fe-4S] cluster as cofactor. It depends on hybrid [4Fe-2O-2S] cluster as a cofactor.

The protein localises to the cytoplasm. The enzyme catalyses A + NH4(+) + H2O = hydroxylamine + AH2 + H(+). Functionally, catalyzes the reduction of hydroxylamine to form NH(3) and H(2)O. In Thermosipho melanesiensis (strain DSM 12029 / CIP 104789 / BI429), this protein is Hydroxylamine reductase.